A 247-amino-acid polypeptide reads, in one-letter code: Caffeoyl-CoA O-methyltransferase (247 aa).

Residue Lys21 participates in substrate binding. S-adenosyl-L-methionine is bound by residues Thr63, Glu85, 87–88 (GV), Ser93, Asp111, and Ala140. Asp163 contributes to the substrate binding site. A divalent metal cation is bound at residue Asp163. Asp165 contacts S-adenosyl-L-methionine. A divalent metal cation-binding residues include Asp189 and Asn190. Asn194 is a substrate binding site.

Belongs to the class I-like SAM-binding methyltransferase superfamily. Cation-dependent O-methyltransferase family. CCoAMT subfamily. In terms of assembly, homodimer. Requires Ca(2+) as cofactor. It depends on Mg(2+) as a cofactor. The cofactor is Zn(2+).

It carries out the reaction (E)-caffeoyl-CoA + S-adenosyl-L-methionine = (E)-feruloyl-CoA + S-adenosyl-L-homocysteine + H(+). It functions in the pathway aromatic compound metabolism; phenylpropanoid biosynthesis. In terms of biological role, methylates caffeoyl-CoA to feruloyl-CoA and 5-hydroxyferuloyl-CoA to sinapoyl-CoA. Plays a role in the synthesis of feruloylated polysaccharides. Involved in the reinforcement of the plant cell wall. Also involved in the responding to wounding or pathogen challenge by the increased formation of cell wall-bound ferulic acid polymers. The protein is Caffeoyl-CoA O-methyltransferase (CCOMT) of Medicago sativa (Alfalfa).